The sequence spans 1443 residues: DNA polymerase III PolC-type (1443 aa).

An Exonuclease domain is found at 408–567; it reads FVIFDIETTG…YDTQALKKVF (160 aa).

Belongs to the DNA polymerase type-C family. PolC subfamily.

The protein localises to the cytoplasm. It carries out the reaction DNA(n) + a 2'-deoxyribonucleoside 5'-triphosphate = DNA(n+1) + diphosphate. In terms of biological role, required for replicative DNA synthesis. This DNA polymerase also exhibits 3' to 5' exonuclease activity. The protein is DNA polymerase III PolC-type of Mycoplasma pneumoniae (strain ATCC 29342 / M129 / Subtype 1) (Mycoplasmoides pneumoniae).